The sequence spans 588 residues: MNNSINHKFHHISRAEYQELLAVSRGDAVADYIIDNVSILDLINGGEISGPIVIKGRYIAGVGAEYADAPALQRIDARGATAVPGFIDAHLHIESSMMTPVTFETATLPRGLTTVICDPHEIVNVMGEAGFAWFARCAEQARQNQYLQVSSCVPALEGCDVNGASFTLEQMLAWRDHPQVTGLAEMMDYPGVISGQNALLDKLDAFRHLTLDGHCPGLGGKELNAYITAGIENCHESYQLEEGRRKLQLGMSLMIREGSAARNLNALAPLINEFNSPQCMLCTDDRNPWEIAHEGHIDALIRRLIEQHNVPLHVAYRVASWSTARHFGLNHLGLLAPGKQADIVLLSDARKVTVQQVLVKGEPIDAQTLQAEESARLAQSAPPYGNTIARQPVSASDFALQFTPGKRYRVIDVIHNELITHSHSSVYSENGFDRDDVCFIAVLERYGQRLAPACGLLGGFGLNEGALAATVSHDSHNIVVIGRSAEEMALAVNQVIQDGGGLCVVRNGQVQSHLPLPIAGLMSTDTAQSLAEQIDALKAAARECGPLPDEPFIQMAFLSLPVIPALKLTSQGLFDVEKFAFTTLEVTE.

The protein belongs to the metallo-dependent hydrolases superfamily. Adenine deaminase family. In terms of assembly, homodimer. It depends on Mn(2+) as a cofactor.

The enzyme catalyses adenine + H2O + H(+) = hypoxanthine + NH4(+). The sequence is that of Adenine deaminase from Shigella sonnei (strain Ss046).